A 230-amino-acid chain; its full sequence is MKRDERWEGVYSFEDSPFIMEILTELRDESTGPIAFRKGLVKLGRYMAYEITKTMATEKVPIRTPLEETEGIIVKDRRNVVIITVLRAAIPLMEGLIKVFEHARVGIVSASRGKAPKFEIEMKYVKVPRIKAEDTVIIADPMIATGSTLIKVLDEVKKYGNAKRYVVVGVLAAPEGITRIKEAHPDVEMFVAAIDRELNDHGYILPGLGDAGDRAFGEPIRFEDGAPGGI.

Residue 38-42 (KGLVK) participates in GTP binding. Residues R87, R112, and 140 to 148 (DPMIATGST) contribute to the 5-phospho-alpha-D-ribose 1-diphosphate site. Residues I204 and 209 to 211 (GDA) contribute to the uracil site. D210 lines the 5-phospho-alpha-D-ribose 1-diphosphate pocket.

This sequence belongs to the UPRTase family. It depends on Mg(2+) as a cofactor.

The enzyme catalyses UMP + diphosphate = 5-phospho-alpha-D-ribose 1-diphosphate + uracil. It participates in pyrimidine metabolism; UMP biosynthesis via salvage pathway; UMP from uracil: step 1/1. With respect to regulation, allosterically activated by GTP. In terms of biological role, catalyzes the conversion of uracil and 5-phospho-alpha-D-ribose 1-diphosphate (PRPP) to UMP and diphosphate. This Thermococcus kodakarensis (strain ATCC BAA-918 / JCM 12380 / KOD1) (Pyrococcus kodakaraensis (strain KOD1)) protein is Uracil phosphoribosyltransferase.